Reading from the N-terminus, the 326-residue chain is MQSIIRQTEAALFAGAVLDRETAGKLARIEGSDIYTLMDVARRVRDHFGAGKVDLCSIVNAKSGACSEDCRFCAQSAHHQACVKTYDLLDPDAIVGRARVMEAEGAHRFSLVTSGRGMSDAELEPVLAIYERLRRETKLSLCASLGILNEAQLRRLAEAGVTMYHHNLEASRRFFPQICTTHSYDERIATIRAAQAAGMVVCSGGIFSMGETIDDRIDMAFELRELGIRSVPINILNPIAGTPLEGQPLIPPLEILKSIALYRLILPSARIRMAGGREGALRDLQSLPFIAGADAALVGSYLTTSGRTVAEDIQMLRDLGLNVNNL.

The 230-residue stretch at 48 to 277 folds into the Radical SAM core domain; it reads FGAGKVDLCS…SARIRMAGGR (230 aa). [4Fe-4S] cluster is bound by residues Cys66, Cys70, and Cys73. Positions 110, 142, 202, and 272 each coordinate [2Fe-2S] cluster.

This sequence belongs to the radical SAM superfamily. Biotin synthase family. Homodimer. [4Fe-4S] cluster serves as cofactor. The cofactor is [2Fe-2S] cluster.

It catalyses the reaction (4R,5S)-dethiobiotin + (sulfur carrier)-SH + 2 reduced [2Fe-2S]-[ferredoxin] + 2 S-adenosyl-L-methionine = (sulfur carrier)-H + biotin + 2 5'-deoxyadenosine + 2 L-methionine + 2 oxidized [2Fe-2S]-[ferredoxin]. The protein operates within cofactor biosynthesis; biotin biosynthesis; biotin from 7,8-diaminononanoate: step 2/2. Catalyzes the conversion of dethiobiotin (DTB) to biotin by the insertion of a sulfur atom into dethiobiotin via a radical-based mechanism. This is Biotin synthase from Heliobacterium modesticaldum (strain ATCC 51547 / Ice1).